We begin with the raw amino-acid sequence, 293 residues long: MNSQLVNPPHAFNYIESQRDEYQLSHDLTEIILQFPSTAAQLTARLSRSCMKIDHCVIEYRQQVPINATGSVIVEIHDKRMTDNESLQASWTFPLRCNIDLHYFSASFFSLKDPIPWKLYYRVSDTNVHQRTHFAKFKGKLKLSTAKHSVDIPFRAPTVKILSKQFTDKDVDFSHVDYGRWERKPIRCASMSRVGLRGPIEIRPGESWASRSTIGVGQSEGESEIENELHTYRDLQRLGASVLDPGESASIVGANMAQSNITMSVAQLNELVRTTVQECIKSNCNSSQPKNFK.

This sequence belongs to the begomovirus movement protein BC1 family. As to quaternary structure, binds to dimeric supercoiled plasmid DNA. In terms of processing, phosphorylated.

The protein localises to the host cell membrane. It localises to the host microsome membrane. It is found in the host endoplasmic reticulum membrane. In terms of biological role, transports viral genome to neighboring plant cells directly through plasmosdesmata, without any budding. The movement protein allows efficient cell to cell propagation, by bypassing the host cell wall barrier. Begomovirus genome is shuttled out of nucleus by Nuclear shuttle protein (NSP) and the movement protein transports the DNA-NSP complex to cell plasmodesmata and facilitates further movement across the cell wall. This chain is Movement protein BC1, found in Potato yellow mosaic virus (isolate Venezuela) (PYMV).